The primary structure comprises 396 residues: Elongation factor Tu (396 aa).

The region spanning 10 to 206 is the tr-type G domain; that stretch reads KPHCNIGTIG…AVDSYIPQPE (197 aa). Residues 19 to 26 are G1; sequence GHVDHGKT. 19–26 lines the GTP pocket; sequence GHVDHGKT. Residue threonine 26 coordinates Mg(2+). Residues 60 to 64 form a G2 region; the sequence is GITIS. Residues 81-84 are G3; the sequence is DCPG. Residues 81–85 and 136–139 each bind GTP; these read DCPGH and NKCD. The tract at residues 136-139 is G4; that stretch reads NKCD. The tract at residues 174–176 is G5; the sequence is SAL.

The protein belongs to the TRAFAC class translation factor GTPase superfamily. Classic translation factor GTPase family. EF-Tu/EF-1A subfamily. As to quaternary structure, monomer.

It is found in the cytoplasm. It catalyses the reaction GTP + H2O = GDP + phosphate + H(+). Its function is as follows. GTP hydrolase that promotes the GTP-dependent binding of aminoacyl-tRNA to the A-site of ribosomes during protein biosynthesis. In Rhodopseudomonas palustris (strain BisA53), this protein is Elongation factor Tu.